Here is a 323-residue protein sequence, read N- to C-terminus: Cyclin-D5-1 (323 aa).

Disordered stretches follow at residues 17 to 36 and 281 to 323; these read ESSL…KQEP and HMTP…MRRL.

Belongs to the cyclin family. Cyclin D subfamily.

The protein is Cyclin-D5-1 (CYCD5-1) of Arabidopsis thaliana (Mouse-ear cress).